The following is a 101-amino-acid chain: MSRSLAIEGQLRPADAKPNALRRNGKIPAVLYGPTIESSISLVVDTRAAELLVRDARPQKTPIQLSIPDLPWQGTVVLQEVQAHPAKDTLYHLSFLAKAEN.

Belongs to the bacterial ribosomal protein bL25 family. Part of the 50S ribosomal subunit; part of the 5S rRNA/L5/L18/L25 subcomplex. Contacts the 5S rRNA. Binds to the 5S rRNA independently of L5 and L18.

This is one of the proteins that binds to the 5S RNA in the ribosome where it forms part of the central protuberance. In Thermosynechococcus vestitus (strain NIES-2133 / IAM M-273 / BP-1), this protein is Large ribosomal subunit protein bL25.